We begin with the raw amino-acid sequence, 48 residues long: Putative protein P' (48 aa).

This is Putative protein P' from Bos taurus (Bovine).